Reading from the N-terminus, the 179-residue chain is uncharacterized protein (179 aa).

Polar residues predominate over residues 1–10 (ATLSAGQPAS). 3 disordered regions span residues 1–35 (ATLSAGQPASLTEAEPNTEKATLHRHPAPKRRGKC), 59–80 (VRRNSRRSEPLSGSQPRPPIVT), and 131–179 (ECPT…STCR). The span at 23 to 33 (LHRHPAPKRRG) shows a compositional bias: basic residues. Residues 149-158 (TPSRVRRSRR) are compositionally biased toward basic residues.

This is an uncharacterized protein from Human cytomegalovirus (strain AD169) (HHV-5).